A 110-amino-acid polypeptide reads, in one-letter code: Large ribosomal subunit protein uL24 (110 aa).

The protein belongs to the universal ribosomal protein uL24 family. In terms of assembly, part of the 50S ribosomal subunit.

Functionally, one of two assembly initiator proteins, it binds directly to the 5'-end of the 23S rRNA, where it nucleates assembly of the 50S subunit. In terms of biological role, one of the proteins that surrounds the polypeptide exit tunnel on the outside of the subunit. This chain is Large ribosomal subunit protein uL24, found in Desulfovibrio desulfuricans (strain ATCC 27774 / DSM 6949 / MB).